The sequence spans 414 residues: Enolase (414 aa).

Glutamine 162 is a binding site for (2R)-2-phosphoglycerate. Glutamate 204 (proton donor) is an active-site residue. 3 residues coordinate Mg(2+): aspartate 239, glutamate 280, and aspartate 307. (2R)-2-phosphoglycerate is bound by residues lysine 332, arginine 361, serine 362, and lysine 383. Lysine 332 acts as the Proton acceptor in catalysis.

This sequence belongs to the enolase family. Mg(2+) is required as a cofactor.

It localises to the cytoplasm. The protein localises to the secreted. It is found in the cell surface. The enzyme catalyses (2R)-2-phosphoglycerate = phosphoenolpyruvate + H2O. It participates in carbohydrate degradation; glycolysis; pyruvate from D-glyceraldehyde 3-phosphate: step 4/5. Its function is as follows. Catalyzes the reversible conversion of 2-phosphoglycerate (2-PG) into phosphoenolpyruvate (PEP). It is essential for the degradation of carbohydrates via glycolysis. This Campylobacter jejuni subsp. jejuni serotype O:2 (strain ATCC 700819 / NCTC 11168) protein is Enolase.